Here is a 374-residue protein sequence, read N- to C-terminus: DNA replication and repair protein RecF (374 aa).

30 to 37 (GENAQGKT) serves as a coordination point for ATP.

It belongs to the RecF family.

Its subcellular location is the cytoplasm. Its function is as follows. The RecF protein is involved in DNA metabolism; it is required for DNA replication and normal SOS inducibility. RecF binds preferentially to single-stranded, linear DNA. It also seems to bind ATP. The polypeptide is DNA replication and repair protein RecF (Pediococcus pentosaceus (strain ATCC 25745 / CCUG 21536 / LMG 10740 / 183-1w)).